A 556-amino-acid polypeptide reads, in one-letter code: Cholesterol oxidase (556 aa).

The FAD site is built by G18, E37, G88, A93, and V235. Catalysis depends on H471, which acts as the Proton acceptor. An FAD-binding site is contributed by G504.

Belongs to the GMC oxidoreductase family. The cofactor is FAD.

The enzyme catalyses cholesterol + O2 = cholest-5-en-3-one + H2O2. It catalyses the reaction cholest-5-en-3-one = cholest-4-en-3-one. It participates in steroid metabolism; cholesterol degradation. Its function is as follows. Bifunctional enzyme that catalyzes the oxidation and isomerization of cholesterol to cholestenone (cholest-4-en-3-one), an initial step in the cholesterol degradation process. The polypeptide is Cholesterol oxidase (Acinetobacter baumannii).